The sequence spans 353 residues: Photosystem II protein D1 (353 aa).

Position 2 is an N-acetylthreonine (T2). At T2 the chain carries Phosphothreonine. 3 helical membrane-spanning segments follow: residues Y29–S46, H118–L133, and W142–A156. H118 contributes to the chlorophyll a binding site. Y126 is a pheophytin a binding site. Residues D170 and E189 each contribute to the [CaMn4O5] cluster site. Residues F197–L218 traverse the membrane as a helical segment. Chlorophyll a is bound at residue H198. Residues H215 and S264–F265 contribute to the a quinone site. H215 contributes to the Fe cation binding site. H272 is a Fe cation binding site. A helical transmembrane segment spans residues F274 to L288. [CaMn4O5] cluster contacts are provided by H332, E333, D342, and A344. Residues A345–G353 constitute a propeptide that is removed on maturation.

It belongs to the reaction center PufL/M/PsbA/D family. As to quaternary structure, PSII is composed of 1 copy each of membrane proteins PsbA, PsbB, PsbC, PsbD, PsbE, PsbF, PsbH, PsbI, PsbJ, PsbK, PsbL, PsbM, PsbT, PsbX, PsbY, PsbZ, Psb30/Ycf12, at least 3 peripheral proteins of the oxygen-evolving complex and a large number of cofactors. It forms dimeric complexes. The D1/D2 heterodimer binds P680, chlorophylls that are the primary electron donor of PSII, and subsequent electron acceptors. It shares a non-heme iron and each subunit binds pheophytin, quinone, additional chlorophylls, carotenoids and lipids. D1 provides most of the ligands for the Mn4-Ca-O5 cluster of the oxygen-evolving complex (OEC). There is also a Cl(-1) ion associated with D1 and D2, which is required for oxygen evolution. The PSII complex binds additional chlorophylls, carotenoids and specific lipids. serves as cofactor. In terms of processing, tyr-161 forms a radical intermediate that is referred to as redox-active TyrZ, YZ or Y-Z. Post-translationally, C-terminally processed by CTPA; processing is essential to allow assembly of the oxygen-evolving complex and thus photosynthetic growth.

The protein resides in the plastid. The protein localises to the chloroplast thylakoid membrane. The enzyme catalyses 2 a plastoquinone + 4 hnu + 2 H2O = 2 a plastoquinol + O2. Its function is as follows. Photosystem II (PSII) is a light-driven water:plastoquinone oxidoreductase that uses light energy to abstract electrons from H(2)O, generating O(2) and a proton gradient subsequently used for ATP formation. It consists of a core antenna complex that captures photons, and an electron transfer chain that converts photonic excitation into a charge separation. The D1/D2 (PsbA/PsbD) reaction center heterodimer binds P680, the primary electron donor of PSII as well as several subsequent electron acceptors. The polypeptide is Photosystem II protein D1 (Ceratophyllum demersum (Rigid hornwort)).